The following is a 366-amino-acid chain: Alanine racemase (366 aa).

Lys40 acts as the Proton acceptor; specific for D-alanine in catalysis. Lys40 bears the N6-(pyridoxal phosphate)lysine mark. Arg136 contacts substrate. Tyr263 serves as the catalytic Proton acceptor; specific for L-alanine. Met310 is a binding site for substrate.

The protein belongs to the alanine racemase family. Requires pyridoxal 5'-phosphate as cofactor.

It carries out the reaction L-alanine = D-alanine. Its pathway is amino-acid biosynthesis; D-alanine biosynthesis; D-alanine from L-alanine: step 1/1. Its function is as follows. Catalyzes the interconversion of L-alanine and D-alanine. May also act on other amino acids. The protein is Alanine racemase (alr) of Streptococcus pyogenes serotype M28 (strain MGAS6180).